The sequence spans 408 residues: RUN domain-containing protein 3B (408 aa).

Positions 1–25 are disordered; the sequence is MASRSLGGLSGSRGGGGGGGGKKSL. Over residues 8–22 the composition is skewed to gly residues; sequence GLSGSRGGGGGGGGK. Omega-N-methylarginine is present on R13. An RUN domain is found at 58–190; it reads DDSSPEFNNF…IDFSFCLKGE (133 aa). The tract at residues 213 to 238 is disordered; it reads DSISSDEEELRTFGSSDSESSTPENV. 2 positions are modified to phosphoserine: S216 and S217. The span at 225-236 shows a compositional bias: polar residues; it reads FGSSDSESSTPE. Positions 301 to 326 form a coiled coil; sequence AHKLEKEQLEYIIVELQDQLKSYQSL. The disordered stretch occupies residues 337 to 359; it reads QASLDPSHSQEGDGKQDSLNFIG.

It belongs to the RUNDC3 family. In terms of assembly, interacts with RAP2A.

In Mus musculus (Mouse), this protein is RUN domain-containing protein 3B (Rundc3b).